The chain runs to 309 residues: uncharacterized protein (309 aa).

This is an uncharacterized protein from Bacillus subtilis (strain 168).